The following is a 394-amino-acid chain: MSKETFQRTKPHINIGTIGHVDHGKTTLTAAITRALSAEGLANFCDYSSIDNTPEEKARGITINASHVEYETPNRHYAHVDCPGHADYVKNMITGAAQMDGAILVVSATDGAMPQTKEHILLARQVGVPYIVVFLNKIDMISQEDAELVDLVEMELSELLEEKGYKGCPIIRGSALKALEGDASYVEKIRELMQAVDDNIPTPEREVDKPFLMPIEDVFSISGRGTVVTGRIERGVVKVGDKVQIVGLRDTRETIVTGVEMFRKELPEGQAGENVGLLLRGIGKNDVERGMVICQPNSVKSHTQFKGTVYILQKEEGGRHKPFFTGYRPQFFFRTTDVTGVVTLPEGVEMVMPGDNVEFDVQLISPVALEEGMRFAIREGGRTIGAGTISKIIA.

Residues 10–204 (KPHINIGTIG…AVDDNIPTPE (195 aa)) enclose the tr-type G domain. Residues 19 to 26 (GHVDHGKT) are G1. 19–26 (GHVDHGKT) contacts GTP. T26 is a Mg(2+) binding site. Residues 60–64 (GITIN) are G2. Residues 81–84 (DCPG) form a G3 region. Residues 81–85 (DCPGH) and 136–139 (NKID) contribute to the GTP site. Residues 136-139 (NKID) form a G4 region. The segment at 174-176 (SAL) is G5.

The protein belongs to the TRAFAC class translation factor GTPase superfamily. Classic translation factor GTPase family. EF-Tu/EF-1A subfamily. Monomer.

It localises to the cytoplasm. It carries out the reaction GTP + H2O = GDP + phosphate + H(+). In terms of biological role, GTP hydrolase that promotes the GTP-dependent binding of aminoacyl-tRNA to the A-site of ribosomes during protein biosynthesis. In Chlamydia abortus (strain DSM 27085 / S26/3) (Chlamydophila abortus), this protein is Elongation factor Tu.